Here is a 597-residue protein sequence, read N- to C-terminus: Lipoprotein LpqB (597 aa).

A signal peptide spans 1 to 28; that stretch reads MTPGRRSALLSRSVCGAIVLAVLVTVSG. The N-palmitoyl cysteine moiety is linked to residue Cys-29. Cys-29 carries S-diacylglycerol cysteine lipidation. Polar residues predominate over residues 38–51; the sequence is PQAIGTINRDSPGS. The interval 38-58 is disordered; the sequence is PQAIGTINRDSPGSSVAAPAP.

The protein belongs to the LpqB lipoprotein family.

The protein resides in the cell membrane. The polypeptide is Lipoprotein LpqB (Rhodococcus jostii (strain RHA1)).